The chain runs to 577 residues: Proline--tRNA ligase (577 aa).

It belongs to the class-II aminoacyl-tRNA synthetase family. ProS type 1 subfamily. As to quaternary structure, homodimer.

It localises to the cytoplasm. The enzyme catalyses tRNA(Pro) + L-proline + ATP = L-prolyl-tRNA(Pro) + AMP + diphosphate. In terms of biological role, catalyzes the attachment of proline to tRNA(Pro) in a two-step reaction: proline is first activated by ATP to form Pro-AMP and then transferred to the acceptor end of tRNA(Pro). As ProRS can inadvertently accommodate and process non-cognate amino acids such as alanine and cysteine, to avoid such errors it has two additional distinct editing activities against alanine. One activity is designated as 'pretransfer' editing and involves the tRNA(Pro)-independent hydrolysis of activated Ala-AMP. The other activity is designated 'posttransfer' editing and involves deacylation of mischarged Ala-tRNA(Pro). The misacylated Cys-tRNA(Pro) is not edited by ProRS. The chain is Proline--tRNA ligase from Herminiimonas arsenicoxydans.